The sequence spans 1266 residues: Kinesin-like protein KIN-12G (1266 aa).

The interval 1–22 is disordered; sequence MPSDCGDDDHGGGSAPAGFELQ. One can recognise a Kinesin motor domain in the interval 32–369; sequence NVQVVIRVRP…LKFAQRAKYI (338 aa). Residue 113–120 participates in ATP binding; that stretch reads GQTGSGKT. Coiled coils occupy residues 613 to 668, 817 to 854, 1029 to 1060, and 1084 to 1120; these read MEFI…SEAV, RSEL…FKRK, ARES…AERV, and SELL…MNRH.

This sequence belongs to the TRAFAC class myosin-kinesin ATPase superfamily. Kinesin family. KIN-12 subfamily.

This is Kinesin-like protein KIN-12G from Oryza sativa subsp. japonica (Rice).